The following is a 283-amino-acid chain: Pyridoxine/pyridoxal/pyridoxamine kinase (283 aa).

Positions 23 and 59 each coordinate substrate. Asp-125 is a binding site for ATP. Tyr-136 is a Mg(2+) binding site. Residues Thr-157, Glu-162, Thr-195, 222-225, and Thr-232 contribute to the ATP site; that span reads HAHV. A Mg(2+)-binding site is contributed by Glu-162. Asp-234 is a substrate binding site.

Belongs to the pyridoxine kinase family. PdxK subfamily. As to quaternary structure, homodimer. The cofactor is Mg(2+).

The enzyme catalyses pyridoxal + ATP = pyridoxal 5'-phosphate + ADP + H(+). It carries out the reaction pyridoxine + ATP = pyridoxine 5'-phosphate + ADP + H(+). The catalysed reaction is pyridoxamine + ATP = pyridoxamine 5'-phosphate + ADP + H(+). It participates in cofactor metabolism; pyridoxal 5'-phosphate salvage; pyridoxal 5'-phosphate from pyridoxal: step 1/1. Its pathway is cofactor metabolism; pyridoxal 5'-phosphate salvage; pyridoxine 5'-phosphate from pyridoxine: step 1/1. The protein operates within cofactor metabolism; pyridoxal 5'-phosphate salvage; pyridoxamine 5'-phosphate from pyridoxamine: step 1/1. Functionally, B6-vitamer kinase involved in the salvage pathway of pyridoxal 5'-phosphate (PLP). Catalyzes the phosphorylation of pyridoxine (PN), pyridoxal (PL), and pyridoxamine (PM), forming their respective 5'-phosphorylated esters, i.e. PNP, PLP and PMP. The polypeptide is Pyridoxine/pyridoxal/pyridoxamine kinase (Bordetella pertussis (strain Tohama I / ATCC BAA-589 / NCTC 13251)).